A 453-amino-acid polypeptide reads, in one-letter code: Trigger factor (453 aa).

One can recognise a PPIase FKBP-type domain in the interval 171–256 (GDRVTVSFKG…ATKVEAPQDV (86 aa)).

This sequence belongs to the FKBP-type PPIase family. Tig subfamily.

It is found in the cytoplasm. It carries out the reaction [protein]-peptidylproline (omega=180) = [protein]-peptidylproline (omega=0). In terms of biological role, involved in protein export. Acts as a chaperone by maintaining the newly synthesized protein in an open conformation. Functions as a peptidyl-prolyl cis-trans isomerase. This is Trigger factor from Rhodopseudomonas palustris (strain BisB5).